A 485-amino-acid chain; its full sequence is Calcium/manganese antiporter SLC30A10 (485 aa).

The Cytoplasmic portion of the chain corresponds to 1-10; it reads MGRYSGKTCR. The helical transmembrane segment at 11–31 threads the bilayer; it reads LLFMLVLTVAFFVAELVSGYL. At 32-40 the chain is on the extracellular side; the sequence is GNSIALLSD. The helical transmembrane segment at 41-61 threads the bilayer; it reads SFNMLSDLISLCVGLSAGYIA. The Cytoplasmic portion of the chain corresponds to 62–81; the sequence is RRPTRGFSATYGYARAEVVG. A helical membrane pass occupies residues 82-102; it reads ALSNAVFLTALCFTIFVEAVL. At 103 to 113 the chain is on the extracellular side; it reads RLARPERIDDP. The chain crosses the membrane as a helical span at residues 114–134; the sequence is ELVLIVGVLGLLVNVVGLLIF. Topologically, residues 135–244 are cytoplasmic; it reads QDCAAWFACC…ALNIRGVLLH (110 aa). The tract at residues 167 to 196 is disordered; the sequence is FGGPQGAEDPRRAADPTAPGSDSAVTLRGT. Residues 245 to 265 traverse the membrane as a helical segment; it reads VMGDALGSVVVVITAIIFYVL. Topologically, residues 266–278 are extracellular; the sequence is PLKSEDPCNWQCY. A helical membrane pass occupies residues 279–299; sequence IDPSLTVLMVIIILSSAFPLI. Residues 300 to 485 lie on the Cytoplasmic side of the membrane; it reads KETAAILLQM…DQCYVNRTHF (186 aa). A required for plasma membrane localization region spans residues 308–485; the sequence is QMVPKGVNME…DQCYVNRTHF (178 aa).

The protein belongs to the cation diffusion facilitator (CDF) transporter (TC 2.A.4) family. SLC30A subfamily. In terms of assembly, forms homodimers. Forms heterodimers and high-molecular weight oligomers with SLC30A3, SLC30A2 and SLC30A4; heterodimerization is mediated by covalent-bound tyrosine residues, occurs probably in a tissue-specific manner and could mediate the intracellular zinc transport activity into early endosomes and recycling endosomes. As to expression, specifically expressed in fetal liver and fetal brain. Expressed in adult tissues with relative levels small intestine &gt; liver &gt; testes &gt; brain &gt; ovary &gt; colon &gt; cervix &gt; prostate &gt; placenta. Expressed in liver and neurons of the nervous system (at protein level).

The protein resides in the cell membrane. It is found in the golgi apparatus membrane. It localises to the recycling endosome membrane. Its subcellular location is the early endosome membrane. It catalyses the reaction Mn(2+)(out) + Ca(2+)(in) = Mn(2+)(in) + Ca(2+)(out). The catalysed reaction is Zn(2+)(in) = Zn(2+)(out). Functionally, calcium:manganese antiporter of the plasma membrane mediating the efflux of intracellular manganese coupled to an active extracellular calcium exchange. Required for intracellular manganese homeostasis, an essential cation for the function of several enzymes, including some crucially important for the metabolism of neurotransmitters and other neuronal metabolic pathways. Manganese can also be cytotoxic and induce oxidative stress, mitochondrial dysfunction and apoptosis. Could also have an intracellular zinc ion transporter activity, directly regulating intracellular zinc ion homeostasis and more indirectly various signaling pathway and biological processes. The sequence is that of Calcium/manganese antiporter SLC30A10 from Homo sapiens (Human).